Consider the following 279-residue polypeptide: 4-diphosphocytidyl-2-C-methyl-D-erythritol kinase (279 aa).

Lysine 10 is a catalytic residue. 91-101 (PVASGIGGGSA) is an ATP binding site. Residue aspartate 130 is part of the active site.

This sequence belongs to the GHMP kinase family. IspE subfamily.

The enzyme catalyses 4-CDP-2-C-methyl-D-erythritol + ATP = 4-CDP-2-C-methyl-D-erythritol 2-phosphate + ADP + H(+). The protein operates within isoprenoid biosynthesis; isopentenyl diphosphate biosynthesis via DXP pathway; isopentenyl diphosphate from 1-deoxy-D-xylulose 5-phosphate: step 3/6. Catalyzes the phosphorylation of the position 2 hydroxy group of 4-diphosphocytidyl-2C-methyl-D-erythritol. This Ruegeria pomeroyi (strain ATCC 700808 / DSM 15171 / DSS-3) (Silicibacter pomeroyi) protein is 4-diphosphocytidyl-2-C-methyl-D-erythritol kinase.